The primary structure comprises 412 residues: Putative competence-damage inducible protein (412 aa).

The protein belongs to the CinA family.

The sequence is that of Putative competence-damage inducible protein from Clostridium perfringens (strain SM101 / Type A).